The sequence spans 22 residues: Superoxide dismutase [Cu-Zn] 2 (22 aa).

Belongs to the Cu-Zn superoxide dismutase family. In terms of assembly, homodimer. Cu cation is required as a cofactor. The cofactor is Zn(2+). In terms of tissue distribution, dominant isozyme in roots.

Its subcellular location is the cytoplasm. The catalysed reaction is 2 superoxide + 2 H(+) = H2O2 + O2. Its function is as follows. Destroys radicals which are normally produced within the cells and which are toxic to biological systems. This Picea abies (Norway spruce) protein is Superoxide dismutase [Cu-Zn] 2.